Reading from the N-terminus, the 199-residue chain is Protein Maeo_0138 (199 aa).

The AMMECR1 domain occupies 7 to 197 (EEGKFAVKFA…ELSPNGKIVE (191 aa)).

The chain is Protein Maeo_0138 from Methanococcus aeolicus (strain ATCC BAA-1280 / DSM 17508 / OCM 812 / Nankai-3).